We begin with the raw amino-acid sequence, 206 residues long: N-(5'-phosphoribosyl)anthranilate isomerase (206 aa).

It belongs to the TrpF family.

The catalysed reaction is N-(5-phospho-beta-D-ribosyl)anthranilate = 1-(2-carboxyphenylamino)-1-deoxy-D-ribulose 5-phosphate. Its pathway is amino-acid biosynthesis; L-tryptophan biosynthesis; L-tryptophan from chorismate: step 3/5. In Citrifermentans bemidjiense (strain ATCC BAA-1014 / DSM 16622 / JCM 12645 / Bem) (Geobacter bemidjiensis), this protein is N-(5'-phosphoribosyl)anthranilate isomerase.